Here is a 1052-residue protein sequence, read N- to C-terminus: Malignant fibrous histiocytoma-amplified sequence 1 (1052 aa).

A2 is subject to N-acetylalanine. LRR repeat units follow at residues 64–85 (DIEA…LGSA), 88–109 (SLRV…VAEL), 112–133 (HLTE…VVSA), 136–157 (ELRK…LGAL), 159–180 (HLEE…LSCL), 182–203 (RLRT…LLQL), 205–226 (ALEE…ISAL), 228–249 (ALKI…FCEL), 251–272 (SLES…FSCL), 274–296 (RLKM…LPLA), 297–318 (GLEE…ISGL), 320–341 (RLLT…IVEL), and 343–364 (GLEE…FGQL). The segment at 64 to 364 (DIEALNLGNN…AVLPDHFGQL (301 aa)) is required for interaction with PJA2. The required for interaction with PPP2R2A stretch occupies residues 64 to 649 (DIEALNLGNN…DKLLSVAEHR (586 aa)). A Roc domain is found at 403-649 (QPAVQPRLKL…DKLLSVAEHR (247 aa)). K601 is subject to N6-acetyllysine.

In terms of assembly, interacts with RAF1. Interacts with HSPD1. Interacts with PPP2CA; retains PPP2CA into the cytoplasm and excludes it from the nucleus. Interacts with PPP2R2A; the interaction is direct. Interacts with PJA2. Post-translationally, ubiquitinated. Ubiquitination by PJA2 does not lead MFHAS1 to proteasomal degradation but positively regulates its function in polarization of macrophages. As to expression, ubiquitously expressed. Overexpressed in malignant fibrous histiocytomas. Expressed in red blood cells (at protein level).

It localises to the cytoplasm. Functionally, probable GTP-binding protein. Functions in innate immunity and more specifically the inflammatory response as a regulator of the Toll-like receptor TLR2 and TLR4 signaling pathways. Negatively regulates the part of the TLR4 signaling pathway that leads to the activation of the transcription factor AP-1. By retaining the phosphatase complex PP2A into the cytoplasm, prevents the dephosphorylation of the AP-1 subunit JUN which is required for proper activation of the transcription factor. Both inhibits and activates the TLR2-dependent signaling pathway. Positively regulates the TLR2 signaling pathway to activate specifically the downstream p38 and JNK MAP kinases and promote the polarization of macrophages toward the pro-inflammatory M1 phenotype. It may also play a role in the regulation of inflammation induced by high glucose through the PKB/AKT signaling pathway. Also involved in erythrocyte differentiation through activation of the ERK1/ERK2 signaling pathway. The chain is Malignant fibrous histiocytoma-amplified sequence 1 from Homo sapiens (Human).